Reading from the N-terminus, the 601-residue chain is ATP-dependent RNA helicase DeaD (601 aa).

Residues 6–34 (STFSFLGLNPFIIQSLNEMGYVKPSPIQA) carry the Q motif motif. A Helicase ATP-binding domain is found at 37-208 (IPLLLEGRDV…KRFMRNPKEI (172 aa)). 50 to 57 (AQTGSGKT) contacts ATP. Residues 156–159 (DEAD) carry the DEAD box motif. Positions 231–378 (KTDALIRFLE…EVQLPKVELL (148 aa)) constitute a Helicase C-terminal domain. Residues 552-576 (SRHYENKTTHRSIFNKDKNSNRRVS) are compositionally biased toward basic and acidic residues. Residues 552-601 (SRHYENKTTHRSIFNKDKNSNRRVSDGSFNKSNSPKKTEFKSSFFRRRNV) are disordered.

Belongs to the DEAD box helicase family. DeaD/CsdA subfamily.

It localises to the cytoplasm. It catalyses the reaction ATP + H2O = ADP + phosphate + H(+). In terms of biological role, DEAD-box RNA helicase involved in various cellular processes at low temperature, including ribosome biogenesis, mRNA degradation and translation initiation. The chain is ATP-dependent RNA helicase DeaD from Buchnera aphidicola subsp. Acyrthosiphon pisum (strain APS) (Acyrthosiphon pisum symbiotic bacterium).